Consider the following 444-residue polypeptide: Ribosomal protein uS12 methylthiotransferase RimO (444 aa).

Residues 6-116 form the MTTase N-terminal domain; the sequence is PNIGFVSLGC…VMEHVHKYVP (111 aa). The [4Fe-4S] cluster site is built by Cys15, Cys51, Cys80, Cys148, Cys152, and Cys155. The 242-residue stretch at 134-375 folds into the Radical SAM core domain; that stretch reads LTPKHYAYLK…MQLQQEISAA (242 aa). Positions 378 to 444 constitute a TRAM domain; sequence QQKIGKTWKV…ADEYDLWGTC (67 aa).

This sequence belongs to the methylthiotransferase family. RimO subfamily. It depends on [4Fe-4S] cluster as a cofactor.

The protein localises to the cytoplasm. It carries out the reaction L-aspartate(89)-[ribosomal protein uS12]-hydrogen + (sulfur carrier)-SH + AH2 + 2 S-adenosyl-L-methionine = 3-methylsulfanyl-L-aspartate(89)-[ribosomal protein uS12]-hydrogen + (sulfur carrier)-H + 5'-deoxyadenosine + L-methionine + A + S-adenosyl-L-homocysteine + 2 H(+). Functionally, catalyzes the methylthiolation of an aspartic acid residue of ribosomal protein uS12. In Actinobacillus succinogenes (strain ATCC 55618 / DSM 22257 / CCUG 43843 / 130Z), this protein is Ribosomal protein uS12 methylthiotransferase RimO.